The following is a 126-amino-acid chain: Protein C10 (126 aa).

Position 2 is an N-acetylalanine (Ala-2).

It belongs to the UPF0456 family. Ubiquitously expressed, with higher expression in lung.

Its subcellular location is the cytoplasm. Its function is as follows. In brain, may be required for corpus callosum development. This chain is Protein C10 (Grcc10), found in Mus musculus (Mouse).